A 679-amino-acid polypeptide reads, in one-letter code: UvrABC system protein B (679 aa).

The Helicase ATP-binding domain maps to 25-190; it reads EGVNQGQRYQ…SRNDFDITRG (166 aa). Position 38–45 (38–45) interacts with ATP; the sequence is GATGTGKT. The Beta-hairpin signature appears at 91 to 114; it reads YYDYYQPEAYVPVSDTYIAKTASI. A Helicase C-terminal domain is found at 429-591; that stretch reads QVDDLLAEIR…IVPRPAGKRA (163 aa). In terms of domain architecture, UVR spans 639-674; sequence PELIDQLETKMKEAAKNLNFEEAASLRDRIKKFRQK.

The protein belongs to the UvrB family. As to quaternary structure, forms a heterotetramer with UvrA during the search for lesions. Interacts with UvrC in an incision complex.

Its subcellular location is the cytoplasm. In terms of biological role, the UvrABC repair system catalyzes the recognition and processing of DNA lesions. A damage recognition complex composed of 2 UvrA and 2 UvrB subunits scans DNA for abnormalities. Upon binding of the UvrA(2)B(2) complex to a putative damaged site, the DNA wraps around one UvrB monomer. DNA wrap is dependent on ATP binding by UvrB and probably causes local melting of the DNA helix, facilitating insertion of UvrB beta-hairpin between the DNA strands. Then UvrB probes one DNA strand for the presence of a lesion. If a lesion is found the UvrA subunits dissociate and the UvrB-DNA preincision complex is formed. This complex is subsequently bound by UvrC and the second UvrB is released. If no lesion is found, the DNA wraps around the other UvrB subunit that will check the other stand for damage. The chain is UvrABC system protein B from Prochlorococcus marinus (strain MIT 9303).